The following is a 389-amino-acid chain: PqqA peptide cyclase (389 aa).

The Radical SAM core domain occupies 20 to 235; sequence VGLPLWLLAE…TNEYRARLEA (216 aa). 3 residues coordinate [4Fe-4S] cluster: cysteine 34, cysteine 38, and cysteine 41.

Belongs to the radical SAM superfamily. PqqE family. In terms of assembly, interacts with PqqD. The interaction is necessary for activity of PqqE. It depends on [4Fe-4S] cluster as a cofactor.

The enzyme catalyses [PQQ precursor protein] + S-adenosyl-L-methionine = E-Y cross-linked-[PQQ precursor protein] + 5'-deoxyadenosine + L-methionine + H(+). It functions in the pathway cofactor biosynthesis; pyrroloquinoline quinone biosynthesis. Catalyzes the cross-linking of a glutamate residue and a tyrosine residue in the PqqA protein as part of the biosynthesis of pyrroloquinoline quinone (PQQ). The sequence is that of PqqA peptide cyclase from Pseudomonas fluorescens (strain ATCC BAA-477 / NRRL B-23932 / Pf-5).